Reading from the N-terminus, the 223-residue chain is Glutathione S-transferase A1 (223 aa).

Residue Met1 is modified to N-acetylmethionine. Ala2 carries the N-acetylalanine; in Glutathione S-transferase A1, N-terminally processed modification. The GST N-terminal domain occupies 3–83 (GKPVLHYFNA…YIATKYDLYG (81 aa)). Residue Lys4 is modified to N6-succinyllysine. Glutathione-binding positions include Tyr9, Lys45, 54–55 (QV), and 67–68 (QT). The 124-residue stretch at 85-208 (DMKERALIDM…QPGSQRKPPM (124 aa)) folds into the GST C-terminal domain.

This sequence belongs to the GST superfamily. Alpha family. In terms of assembly, homodimer. Expressed in the liver, skin and kidney.

The enzyme catalyses RX + glutathione = an S-substituted glutathione + a halide anion + H(+). It catalyses the reaction prostaglandin A2 + glutathione = prostaglandin A2-S-(R)-glutathione. The catalysed reaction is prostaglandin J2 + glutathione = prostaglandin J2-S-(R)-glutathione. It carries out the reaction (13S)-hydroperoxy-(9Z,11E)-octadecadienoate + 2 glutathione = (13S)-hydroxy-(9Z,11E)-octadecadienoate + glutathione disulfide + H2O. The enzyme catalyses androst-5-ene-3,17-dione = androst-4-ene-3,17-dione. Functionally, glutathione S-transferase that catalyzes the nucleophilic attack of the sulfur atom of glutathione on the electrophilic groups of a wide range of exogenous and endogenous compounds. Involved in the formation of glutathione conjugates of both prostaglandin A2 (PGA2) and prostaglandin J2 (PGJ2). It also catalyzes the isomerization of D5-androstene-3,17-dione (AD) into D4-androstene-3,17-dione and may therefore play an important role in hormone biosynthesis. Through its glutathione-dependent peroxidase activity toward the fatty acid hydroperoxide (13S)-hydroperoxy-(9Z,11E)-octadecadienoate/13-HPODE it is also involved in the metabolism of oxidized linoleic acid. The sequence is that of Glutathione S-transferase A1 (Gsta1) from Mus musculus (Mouse).